Reading from the N-terminus, the 335-residue chain is Tetraacyldisaccharide 4'-kinase (335 aa).

Position 58-65 (58-65 (TVGGSGKT)) interacts with ATP.

This sequence belongs to the LpxK family.

The catalysed reaction is a lipid A disaccharide + ATP = a lipid IVA + ADP + H(+). It functions in the pathway glycolipid biosynthesis; lipid IV(A) biosynthesis; lipid IV(A) from (3R)-3-hydroxytetradecanoyl-[acyl-carrier-protein] and UDP-N-acetyl-alpha-D-glucosamine: step 6/6. In terms of biological role, transfers the gamma-phosphate of ATP to the 4'-position of a tetraacyldisaccharide 1-phosphate intermediate (termed DS-1-P) to form tetraacyldisaccharide 1,4'-bis-phosphate (lipid IVA). This is Tetraacyldisaccharide 4'-kinase from Shewanella sp. (strain MR-4).